A 609-amino-acid polypeptide reads, in one-letter code: Glutamine--fructose-6-phosphate aminotransferase [isomerizing] (609 aa).

The active-site Nucleophile; for GATase activity is Cys2. Residues 2–219 (CGIFGYLGNQ…SGEFAIVSQG (218 aa)) enclose the Glutamine amidotransferase type-2 domain. SIS domains lie at 285 to 426 (LSDV…VHGA) and 458 to 599 (WAQP…IDCP). Residue Lys604 is the For Fru-6P isomerization activity of the active site.

Homodimer.

It localises to the cytoplasm. It carries out the reaction D-fructose 6-phosphate + L-glutamine = D-glucosamine 6-phosphate + L-glutamate. Catalyzes the first step in hexosamine metabolism, converting fructose-6P into glucosamine-6P using glutamine as a nitrogen source. This chain is Glutamine--fructose-6-phosphate aminotransferase [isomerizing], found in Chlamydia pneumoniae (Chlamydophila pneumoniae).